A 345-amino-acid chain; its full sequence is Phosphate acyltransferase (345 aa).

It belongs to the PlsX family. Homodimer. Probably interacts with PlsY.

The protein resides in the cytoplasm. It catalyses the reaction a fatty acyl-[ACP] + phosphate = an acyl phosphate + holo-[ACP]. Its pathway is lipid metabolism; phospholipid metabolism. Functionally, catalyzes the reversible formation of acyl-phosphate (acyl-PO(4)) from acyl-[acyl-carrier-protein] (acyl-ACP). This enzyme utilizes acyl-ACP as fatty acyl donor, but not acyl-CoA. This Thermodesulfovibrio yellowstonii (strain ATCC 51303 / DSM 11347 / YP87) protein is Phosphate acyltransferase.